A 917-amino-acid polypeptide reads, in one-letter code: Probable dipeptidyl-aminopeptidase B (917 aa).

A disordered region spans residues 1–75; that stretch reads MTVGRRLNDE…KYRDDVEEDW (75 aa). Over 1-93 the chain is Cytoplasmic; that stretch reads MTVGRRLNDE…NAKPSQRRTQ (93 aa). Positions 27–39 are enriched in low complexity; it reads DSSSTASVSLTLV. Over residues 40–49 the composition is skewed to polar residues; the sequence is DGTNHTTAKP. Basic and acidic residues predominate over residues 57-69; it reads VSRDRYADEKYRD. Residues 94 to 114 traverse the membrane as a helical; Signal-anchor for type II membrane protein segment; the sequence is IVFWLLVALCVGGWAVAFLFF. Topologically, residues 115 to 917 are vacuolar; sequence VTSPGNTIST…KRVIRRLLHR (803 aa). The segment covering 124-133 has biased composition (polar residues); that stretch reads TTPDTGSGSP. The disordered stretch occupies residues 124 to 150; the sequence is TTPDTGSGSPDSDVIKPGSPPAGKKIP. N-linked (GlcNAc...) asparagine glycans are attached at residues Asn-206, Asn-302, and Asn-354. The active-site Charge relay system is the Ser-759. An N-linked (GlcNAc...) asparagine glycan is attached at Asn-818. Catalysis depends on charge relay system residues Asp-836 and His-869.

The protein belongs to the peptidase S9B family.

Its subcellular location is the vacuole membrane. It catalyses the reaction Release of an N-terminal dipeptide, Xaa-Yaa-|-Zaa-, from a polypeptide, preferentially when Yaa is Pro, provided Zaa is neither Pro nor hydroxyproline.. Its function is as follows. Type IV dipeptidyl-peptidase which removes N-terminal dipeptides sequentially from polypeptides having unsubstituted N-termini provided that the penultimate residue is proline. The protein is Probable dipeptidyl-aminopeptidase B (DAPB) of Arthroderma gypseum (strain ATCC MYA-4604 / CBS 118893) (Microsporum gypseum).